A 30-amino-acid polypeptide reads, in one-letter code: Photosystem I reaction center subunit XII (30 aa).

Residues 7 to 26 (IMVALFAALFTGILALRLGT) traverse the membrane as a helical segment.

Belongs to the PsaM family.

Its subcellular location is the plastid. The protein resides in the chloroplast thylakoid membrane. The protein is Photosystem I reaction center subunit XII of Mesostigma viride (Green alga).